A 309-amino-acid chain; its full sequence is Probable lipid kinase YegS-like (309 aa).

Positions 1–134 (MTTPRWRLIL…IDLLRVDADG (134 aa)) constitute a DAGKc domain. Residues Thr39, 65-71 (GDGTLSA), and Thr96 each bind ATP. Residues Leu219, Asp222, and Leu224 each contribute to the Mg(2+) site. Residue Glu280 is the Proton acceptor of the active site.

It belongs to the diacylglycerol/lipid kinase family. YegS lipid kinase subfamily. Requires Mg(2+) as cofactor. The cofactor is Ca(2+).

It is found in the cytoplasm. Functionally, probably phosphorylates lipids; the in vivo substrate is unknown. The chain is Probable lipid kinase YegS-like from Stenotrophomonas maltophilia (strain K279a).